The primary structure comprises 769 residues: Serine protease HtrA-like (769 aa).

The segment covering 1-20 has biased composition (basic residues); sequence MDIGKKHVIPKSQYRRKRRE. Residues 1–390 are disordered; sequence MDIGKKHVIP…ATSKLNKGRA (390 aa). 2 stretches are compositionally biased toward basic and acidic residues: residues 21–64 and 71–108; these read FFHN…ERFK and LEQR…DVSK. Over residues 126-137 the composition is skewed to polar residues; it reads YEQNSEATLSTK. Basic and acidic residues predominate over residues 138-186; the sequence is STDKVESTEMRKLSSDKNKVGHEEQHVLSKPSEHDKETRIDSESSRTDS. A compositionally biased stretch (polar residues) spans 247-262; it reads QQSQNEQTKTYTYGDS. Basic and acidic residues-rich tracts occupy residues 264 to 296 and 310 to 330; these read QNDK…HIVD and KTDD…HKQN. The span at 331–347 shows a compositional bias: polar residues; the sequence is ADSSETVGYQSQSTASH. Residues 348 to 364 are compositionally biased toward basic and acidic residues; it reads RSTEKRNISINDHDKLN. Positions 365–390 are enriched in polar residues; the sequence is GQKTNTKTSANNNQKKATSKLNKGRA. A helical transmembrane segment spans residues 410–430; sequence LVILMGIIILIVILNAIFNNV. Residues His-504, Asp-534, and Ser-619 each act as charge relay system in the active site. In terms of domain architecture, PDZ spans 680–733; sequence IASLNSFERQAVKLPGKVKNGVVVDQVDNNGLADQSGLKKGDVITELDGKLLED.

It belongs to the peptidase S1C family.

Its subcellular location is the cell membrane. This is Serine protease HtrA-like from Staphylococcus aureus (strain USA300).